The sequence spans 101 residues: Histone H1-like protein EM6 (101 aa).

2 stretches are compositionally biased toward basic residues: residues 1 to 35 (AKKR…HVRK) and 58 to 101 (AKKK…RRRR). The disordered stretch occupies residues 1 to 101 (AKKRSRSRKR…SRTARSRRRR (101 aa)). 4 repeat units span residues 3 to 4 (KR), 5 to 6 (SR), 7 to 8 (SR), and 9 to 10 (KR). The tract at residues 3–22 (KRSRSRKRSASRKRSRSRKR) is 10 X 2 AA approximate tandem repeats of [SK]-R. The stretch at 11–12 (SA) is one 5; approximate repeat. A run of 5 repeats spans residues 13–14 (SR), 15–16 (KR), 17–18 (SR), 19–20 (SR), and 21–22 (KR). The segment at 32 to 65 (HVRKALAAGMKNHLLAHPKGSNNFILAKKKAPRR) is globular.

In terms of tissue distribution, sperm.

The protein localises to the nucleus. The protein resides in the chromosome. This is Histone H1-like protein EM6 from Ensis minor (Razor shell).